Reading from the N-terminus, the 1262-residue chain is MLQQVPENINFPAEEEKILEFWTEFNCFQECLKQSKHKPKFTFYDGPPFATGLPHYGHILAGTIKDIVTRYAHQSGFHVDRRFGWDCHGLPVEYEIDKTLGIRGPEDVAKMGITEYNNQCRAIVMRYSAEWKSTVSRLGRWIDFDNDYKTLYPQFMESVWWVFKQLYDKGLVYRGVKVMPFSTACNTPLSNFESHQNYKDVQDPSVFVTFPLEEDETVSLVAWTTTPWTLPSNLAVCVNPEMQYVKIKDVARGRLLILMEARLSALYKLESDYEILERFPGAYLKGKKYRPLFDYFLKCKENGAFTVLVDNYVKEEEGTGVVHQAPYFGAEDYRVCMDFNIIRKDSLPVCPVDASGCFTTEVTDFAGQYVKDADKSIIRTLKEQGRLLVATTFTHSYPFCWRSDTPLIYKAVPSWFVRVENMVDQLLRNNDLCYWVPELVREKRFGNWLKDARDWTISRNRYWGTPIPLWVSDDFEEVVCIGSVAELEELSGAKISDLHRESVDHLTIPSRCGKGSLHRISEVFDCWFESGSMPYAQVHYPFENKREFEDAFPADFIAEGIDQTRGWFYTLLVLATALFGQPPFKNVIVNGLVLASDGQKMSKRKKNYPDPVSIIQKYGADALRLYLINSPVVRAENLRFKEEGVRDVLKDVLLPWYNAYRFLIQNVLRLQKEEEIEFLYNENTVRESPNITDRWILSFMQSLIGFFETEMAAYRLYTVVPRLVKFVDILTNWYVRMNRRRLKGENGMEDCVMALETLFSVLLSLCRLMAPYTPFLTELMYQNLKVLIDPVSVQDKDTLSIHYLMLPRVREELIDKKTESAVSQMQSVIELGRVIRDRKTIPIKYPLKEIVVIHQDPEALKDIKSLEKYIIEELNVRKVTLSTDKNKYGIRLRAEPDHMVLGKRLKGAFKAVMTSIKQLSSEELEQFQKTGTIVVEGHELHDEDIRLMYTFDQATGGTAQFEAHSDAQALVLLDVTPDQSMVDEGMAREVINRIQKLRKKCNLVPTDEITVYYKAKSEGTYLNSVIESHTEFIFTTIKAPLKPYPVSPSDKVLIQEKTQLKGSELEITLTRGSSLPGPACAYVNLNICANGSEQGGVLLLENPKGDNRLDLLKLKSVVTSIFGVKNTELAVFHDETEIQNQTDLLSLSGKTLCVTAGSAPSLINSSSTLLCQYINLQLLNAKPQECLMGTVGTLLLENPLGQNGLTHQGLLYEAAKVFGLRSRKLKLFLNETQTQEITEDIPVKTLNMKTVYVSVLPTTADF.

The residue at position 1 (Met1) is an N-acetylmethionine. Residues 48–58 (PFATGLPHYGH) carry the 'HIGH' region motif. Residues 600-604 (KMSKR) carry the 'KMSKS' region motif. Lys603 serves as a coordination point for ATP. Phosphoserine occurs at positions 1047 and 1049. At Thr1058 the chain carries Phosphothreonine.

It belongs to the class-I aminoacyl-tRNA synthetase family. Part of a multisubunit complex that groups tRNA ligases for Arg (RARS1), Asp (DARS1), Gln (QARS1), Ile (IARS1), Leu (LARS1), Lys (KARS1), Met (MARS1) the bifunctional ligase for Glu and Pro (EPRS1) and the auxiliary subunits AIMP1/p43, AIMP2/p38 and EEF1E1/p18. Expressed in liver and muscle (at protein level).

The protein resides in the cytoplasm. It is found in the cytosol. It catalyses the reaction tRNA(Ile) + L-isoleucine + ATP = L-isoleucyl-tRNA(Ile) + AMP + diphosphate. In terms of biological role, catalyzes the specific attachment of an amino acid to its cognate tRNA in a 2 step reaction: the amino acid (AA) is first activated by ATP to form AA-AMP and then transferred to the acceptor end of the tRNA. This chain is Isoleucine--tRNA ligase, cytoplasmic, found in Homo sapiens (Human).